A 94-amino-acid chain; its full sequence is Small ribosomal subunit protein uS19 (94 aa).

It belongs to the universal ribosomal protein uS19 family.

Functionally, protein S19 forms a complex with S13 that binds strongly to the 16S ribosomal RNA. This chain is Small ribosomal subunit protein uS19, found in Wolbachia pipientis subsp. Culex pipiens (strain wPip).